Consider the following 232-residue polypeptide: Sugar fermentation stimulation protein homolog (232 aa).

It belongs to the SfsA family.

The protein is Sugar fermentation stimulation protein homolog of Magnetococcus marinus (strain ATCC BAA-1437 / JCM 17883 / MC-1).